The chain runs to 670 residues: tRNA 5-methylaminomethyl-2-thiouridine biosynthesis bifunctional protein MnmC (670 aa).

A tRNA (mnm(5)s(2)U34)-methyltransferase region spans residues 1–245 (MKPIAIQPAS…KREMLTGALS (245 aa)). The tract at residues 271-670 (VGGGIASALL…RKLLKGRAAS (400 aa)) is FAD-dependent cmnm(5)s(2)U34 oxidoreductase.

This sequence in the N-terminal section; belongs to the methyltransferase superfamily. tRNA (mnm(5)s(2)U34)-methyltransferase family. In the C-terminal section; belongs to the DAO family. Requires FAD as cofactor.

It is found in the cytoplasm. It catalyses the reaction 5-aminomethyl-2-thiouridine(34) in tRNA + S-adenosyl-L-methionine = 5-methylaminomethyl-2-thiouridine(34) in tRNA + S-adenosyl-L-homocysteine + H(+). Functionally, catalyzes the last two steps in the biosynthesis of 5-methylaminomethyl-2-thiouridine (mnm(5)s(2)U) at the wobble position (U34) in tRNA. Catalyzes the FAD-dependent demodification of cmnm(5)s(2)U34 to nm(5)s(2)U34, followed by the transfer of a methyl group from S-adenosyl-L-methionine to nm(5)s(2)U34, to form mnm(5)s(2)U34. The chain is tRNA 5-methylaminomethyl-2-thiouridine biosynthesis bifunctional protein MnmC from Cronobacter sakazakii (strain ATCC BAA-894) (Enterobacter sakazakii).